The primary structure comprises 121 residues: Small ribosomal subunit protein uS13 (121 aa).

The interval glycine 94–lysine 121 is disordered.

This sequence belongs to the universal ribosomal protein uS13 family. As to quaternary structure, part of the 30S ribosomal subunit. Forms a loose heterodimer with protein S19. Forms two bridges to the 50S subunit in the 70S ribosome.

Its function is as follows. Located at the top of the head of the 30S subunit, it contacts several helices of the 16S rRNA. In the 70S ribosome it contacts the 23S rRNA (bridge B1a) and protein L5 of the 50S subunit (bridge B1b), connecting the 2 subunits; these bridges are implicated in subunit movement. Contacts the tRNAs in the A and P-sites. This chain is Small ribosomal subunit protein uS13, found in Polaromonas sp. (strain JS666 / ATCC BAA-500).